A 341-amino-acid chain; its full sequence is Probable cytosolic iron-sulfur protein assembly protein Ciao1 (341 aa).

WD repeat units follow at residues 12–51, 58–97, 102–141, 151–190, 197–236, 255–294, and 305–341; these read GHAGRVWSAAWHPGGKLFASCGEDKTIRVWNKSDTDRWVA, GHTRTIRELAWSCCGHYLASASFDTTVAVWDKKSGEFECN, GHDNEVKSVTWSRSGNLLATCSRDKSVWIWEIHHAPDQED, GHTQDVKKVCWHPQEDLLASASYDNTIRMYRQDLADSEWE, SHSSTVWSISFDATGQRLASCSEDTTVKVWQQYGPDNALG, YHSRSVYDIDWCKQTGLLATACGDDTVRIFREASDSDRNE, and AHSQDANKVAWHPTVPGLLLTASDDGEIKLWQYVDAD.

Belongs to the WD repeat CIA1 family.

Functionally, essential component of the cytosolic iron-sulfur (Fe/S) protein assembly machinery. Required for the maturation of extramitochondrial Fe/S proteins. The polypeptide is Probable cytosolic iron-sulfur protein assembly protein Ciao1 (Anopheles gambiae (African malaria mosquito)).